The primary structure comprises 7059 residues: Replicase polyprotein 1ab (7059 aa).

Positions 54–196 (PENHVMVDCR…PWVMYLRKCG (143 aa)) constitute a CoV Nsp1 globular domain. Positions 216–246 (FKVEDAYDLVHDEPKGKFSKKAYALIRGYRG) constitute a BetaCoV Nsp1 C-terminal domain. The 270-residue stretch at 250–519 (LLYVDQYGCD…LICKALYLDY (270 aa)) folds into the CoV Nsp2 N-terminal domain. Residues Cys392, Cys397, Cys413, and Cys416 each contribute to the Zn(2+) site. Residues 392 to 416 (CEQDLCDFKGWVPGNMIDGFACTTC) are C4. Residues 524-713 (CGNLHQRELL…AQAFRSGAKV (190 aa)) enclose the CoV Nsp2 middle domain. Positions 733–851 (RRRICLSGSK…LDQAWRVPCA (119 aa)) constitute a CoV Nsp2 C-terminal domain. The region spanning 853-966 (RCVTFKEQPT…LYCAFTAPED (114 aa)) is the Ubiquitin-like 1 domain. Over residues 972 to 986 (ESGVEEDDVEGEETD) the composition is skewed to acidic residues. The disordered stretch occupies residues 972–1000 (ESGVEEDDVEGEETDLTVTSAGEPCVASE). Residues 1036 to 1274 (DLESVIQDYE…IAQLYGSCIT (239 aa)) form the Peptidase C16 1 domain. Cys1074 (for PL1-PRO activity) is an active-site residue. 4 residues coordinate Zn(2+): Cys1151, Cys1154, Cys1177, and Cys1179. A C4-type 1 zinc finger spans residues 1151–1179 (CIKCDLALKLKGLDAMFFYGDVVSHVCKC). Catalysis depends on for PL1-PRO activity residues His1225 and Asp1236. One can recognise a Macro domain in the interval 1275 to 1435 (PNVCFVKGDI…LISKCQITAV (161 aa)). The region spanning 1491-1563 (DDARTFVQSN…VAQIKALFLD (73 aa)) is the DPUP domain. A Ubiquitin-like 2 domain is found at 1562–1617 (LDKVDILLTVDGVNFTNRFVPVGESFGKSLGNVFCDGVNVTKHKCDINYKGKVFFQ). The Peptidase C16 2 domain maps to 1631–1892 (SSFNFDQKEL…KIEYKPDLSQ (262 aa)). The active-site For PL2-PRO activity is the Cys1671. Cys1749, Cys1751, Cys1783, and Cys1785 together coordinate Zn(2+). Residues 1749–1785 (CKCGVKQEQRTGVDAVMHFGTLSREDLEIGYTVDCSC) form a C4-type 2 zinc finger. Catalysis depends on for PL2-PRO activity residues His1828 and Asp1842. The Nucleic acid-binding domain occupies 1906-2007 (IKAQFKTFEK…TYFNRPLLVD (102 aa)). The G2M domain maps to 2020–2169 (DDGGDISESD…ADNKVIYTTE (150 aa)). Transmembrane regions (helical) follow at residues 2138–2158 (ISACFNFIKWLFVLLFGWIKI), 2199–2219 (ACIIATIFLLWFNFIYANVIF), and 2221–2241 (DFYLPKIGFLPTFVGKIVQWI). The HD1 stretch occupies residues 2138–2385 (ISACFNFIKW…ASFIKLFSLF (248 aa)). The 3Ecto domain occupies 2235–2296 (GKIVQWIKNT…AIDVVQYEAD (62 aa)). Intrachain disulfides connect Cys2251/Cys2275 and Cys2266/Cys2272. Transmembrane regions (helical) follow at residues 2313–2333 (LIVSYALYTAWFYPLFALISI), 2343–2363 (LLMLSTLHWSVRLLVSLANML), and 2365–2385 (AHVFMRFYIIIASFIKLFSLF). A Y1 region spans residues 2383–2473 (SLFRHVAYGC…ELKRPIQPTD (91 aa)). Residues 2383 to 2750 (SLFRHVAYGC…LTTPFSLKGG (368 aa)) form the CoV Nsp3 Y domain. 8 residues coordinate Zn(2+): His2387, Cys2392, Cys2397, Cys2400, Cys2433, His2436, Cys2440, and Cys2443. A ZF1 region spans residues 2387-2400 (HVAYGCSKSGCLFC). Residues 2433 to 2443 (CSKHQWNCIDC) are ZF2. The Y2 stretch occupies residues 2474-2566 (VAYHTVTDVK…MVDKILITTA (93 aa)). The coV-Y stretch occupies residues 2474–2750 (VAYHTVTDVK…LTTPFSLKGG (277 aa)). A Y3 region spans residues 2567–2649 (NTGTSVTETM…DSVMSAVSAG (83 aa)). Positions 2650 to 2750 (LELTDESCNN…LTTPFSLKGG (101 aa)) are Y4. The next 7 membrane-spanning stretches (helical) occupy residues 2752 to 2772 (VFSYFVYVCFVLSLVCFIGLW), 2824 to 2844 (STFGLSYYSNSMACPIVVAVV), 3009 to 3029 (VFDLIYQLFKGLAQPVDFLAL), 3031 to 3051 (ASSIAGAILAVIVVLGFYYLI), 3063 to 3083 (IVFVNVIVWCVNFMMLFVFQV), 3090 to 3110 (VYAICYFYATLYFPSEISVIM), and 3115 to 3135 (LVMYGTIMPLWFCLLYISVVV). The segment at 2752–3135 (VFSYFVYVCF…FCLLYISVVV (384 aa)) is HD2. One can recognise a Nsp4C domain in the interval 3149-3246 (LGTSVRSDGT…TASVSTSFLQ (98 aa)). The 303-residue stretch at 3247–3549 (SGIVKMVNPT…YQQLAGIKLQ (303 aa)) folds into the Peptidase C30 domain. Catalysis depends on for 3CL-PRO activity residues His3287 and Cys3391. Residues 3319 to 3775 (LSLTVMSYQM…IISCYWGLFS (457 aa)) form an HD3 region. The next 7 helical transmembrane spans lie at 3558–3578 (GIVCWIMASTFLFSCIITAFV), 3588–3608 (TNMLSITFCALCVISLAMLLV), 3615–3635 (LTMYIIPVLFTLLYNNYLVVY), 3657–3677 (TYTDEVIYGMLLLIGMVFVTL), 3684–3704 (LFSFIMFVGRVISVVSLWYMG), 3711–3731 (ILLMLASLFGTYTWTTALSMA), and 3755–3775 (IVLVCYLFIGYIISCYWGLFS). One can recognise a RdRp Nsp7 cofactor domain in the interval 3837-3925 (SKLTDVKCAN…DYAKDNTVLQ (89 aa)). The RdRp Nsp8 cofactor domain occupies 3926–4122 (ALQSEFVNMA…HNEVSATVLQ (197 aa)). A Nsp9 ssRNA-binding domain is found at 4123–4232 (NNELMPAKLK…GTISSTVRLQ (110 aa)). The ExoN/MTase coactivator domain maps to 4233–4370 (AGTATEYASN…CVSTDTTVQS (138 aa)). Residues Cys4306, Cys4309, His4315, Cys4322, Cys4348, Cys4351, Cys4359, and Cys4361 each coordinate Zn(2+). 2 zinc fingers span residues 4306-4322 (CIYCRARVEHPDVDGLC) and 4348-4361 (CQVCGFWRDGSCSC). In terms of domain architecture, NiRAN spans 4375-4630 (FLNRVRGTSV…DCELYVNNAY (256 aa)). Mn(2+) contacts are provided by Asn4578 and Asp4587. A Nsp12 Interface domain is found at 4631–4729 (RLFDLVQYDF…MNMDVDTHRY (99 aa)). Zn(2+)-binding residues include His4660, Cys4666, Cys4671, Cys4675, and Cys4852. The region spanning 4730 to 5297 (RLSLKDLLLY…NMYLRSAVMQ (568 aa)) is the Nsp12 RNA-dependent RNA polymerase domain. Positions 4732–4946 (SLKDLLLYAA…HQKCLKSIAA (215 aa)) are rdRp Fingers N-ter. Positions 4947–4985 (TRGVPVVIGTTKFYGGWDDMLRRLIKDVDNPVLMGWDYP) are rdRp Palm N-ter. Positions 4977 to 5139 (PVLMGWDYPK…CYNSDYASKG (163 aa)) constitute a RdRp catalytic domain. Positions 4986–5044 (KCDRAMPNILRIVSSLVLARKHEACCSQSDRFYRLANECAQVLSEIVMCGGCYYVKPGG) are rdRp Fingers C-ter. His5007, Cys5010, and Cys5011 together coordinate Zn(2+). A rdRp Palm C-ter region spans residues 5045-5180 (TSSGDATTAF…NNGPHEFCSQ (136 aa)). Active-site residues include Ser5124, Asp5125, and Asp5126. A rdRp Thumb region spans residues 5181–5297 (HTMLVKMDGD…NMYLRSAVMQ (117 aa)). The CV ZBD domain occupies 5298–5410 (SVGACVVCSS…DDFNRIASCK (113 aa)). Cys5302, Cys5305, Cys5313, Cys5316, Cys5323, Cys5326, His5330, His5336, Cys5347, Cys5352, Cys5369, and His5372 together coordinate Zn(2+). The 182-residue stretch at 5553–5734 (SVLETFQNNV…MCCLGPDIFL (182 aa)) folds into the (+)RNA virus helicase ATP-binding domain. Residue 5578-5585 (GPPGTGKS) coordinates ATP. A (+)RNA virus helicase C-terminal domain is found at 5735-5904 (GTCYRCPKEI…VETRVQCSTN (170 aa)). The 216-residue stretch at 5971 to 6186 (LFITKEEAVK…RCLAVYDCFC (216 aa)) folds into the ExoN domain. Residues Asp5989, Glu5991, and Glu6090 contribute to the active site. Zn(2+)-binding residues include His6156, Cys6160, and His6163. Active-site residues include His6167 and Asp6172. Cys6178 lines the Zn(2+) pocket. An N7-MTase domain is found at 6195–6421 (YPIISNELSI…NLWNTFTKLQ (227 aa)). 6230–6236 (DIGNPKA) is a binding site for S-adenosyl-L-methionine. Residues 6308 to 6322 (CNGGSLYVNKHAFHT) are gpppA-binding. Zn(2+) is bound by residues Cys6346, Cys6367, Cys6378, and His6381. The Nsp15 N-terminal oligomerization domain maps to 6422-6482 (SLENVVYNLV…NVAVELFAKR (61 aa)). The AV-Nsp11N/CoV-Nsp15M domain occupies 6483-6603 (SIRHHPELKL…FAVRKEGQDV (121 aa)). Residues 6653–6792 (TCRTDMEKDF…NDEKVMTFYP (140 aa)) enclose the NendoU domain. Active-site residues include His6683, His6698, Lys6738, Lys6841, Asp6935, Lys6971, and Glu7004. A Nidovirus-type SAM-dependent 2'-O-MTase domain is found at 6797 to 7059 (ASDWKPGYSM…NSRLSWLVMP (263 aa)).

Belongs to the coronaviruses polyprotein 1ab family. Interacts with host PHB and PHB2. As to quaternary structure, interacts with papain-like protease nsp3 and non-structural protein 6. In terms of assembly, monomer. Homodimer. Only the homodimer shows catalytic activity. Interacts with nsp8 and nsp12 to form the replication-transcription complex (RTC): nsp12, nsp7, two subunits of nsp8, and up to two subunits of nsp13. As to quaternary structure, interacts with nsp7, nsp13 and nsp12 to form the replication-transcription complex (RTC): nsp12, nsp7, two subunits of nsp8, and up to two subunits of nsp13. In terms of assembly, interacts with nsp12. Interacts with proofreading exoribonuclease nsp14 and 2'-O-methyltransferase nsp16; these interactions enhance nsp14 and nsp16 enzymatic activities. As to quaternary structure, interacts with nsp7 and nsp8 to form the replication-transcription complex (RTC): nsp12, nsp7, two subunits of nsp8, and up to two subunits of nsp13. Interacts with nsp9. In terms of assembly, interacts with nsp8 to form the replication-transcription complex (RTC): nsp12, nsp7, two subunits of nsp8, and up to two subunits of nsp13. Mn(2+) is required as a cofactor. Mg(2+) serves as cofactor. Specific enzymatic cleavages in vivo by its own proteases yield mature proteins. 3CL-PRO and PL-PRO proteinases are autocatalytically processed.

It is found in the host membrane. The protein localises to the host cytoplasm. It localises to the host perinuclear region. The protein resides in the host endoplasmic reticulum-Golgi intermediate compartment. The enzyme catalyses RNA(n) + a ribonucleoside 5'-triphosphate = RNA(n+1) + diphosphate. It carries out the reaction ATP + H2O = ADP + phosphate + H(+). The catalysed reaction is Thiol-dependent hydrolysis of ester, thioester, amide, peptide and isopeptide bonds formed by the C-terminal Gly of ubiquitin (a 76-residue protein attached to proteins as an intracellular targeting signal).. It catalyses the reaction a 5'-end (N(7)-methyl 5'-triphosphoguanosine)-ribonucleoside in mRNA + S-adenosyl-L-methionine = a 5'-end (N(7)-methyl 5'-triphosphoguanosine)-(2'-O-methyl-ribonucleoside) in mRNA + S-adenosyl-L-homocysteine + H(+). The enzyme catalyses uridylyl-uridylyl-ribonucleotide-RNA = a 3'-end uridylyl-2',3'-cyclophospho-uridine-RNA + a 5'-end dephospho-ribonucleoside-RNA. It carries out the reaction a 5'-end diphospho-ribonucleoside in mRNA + GTP + H(+) = a 5'-end (5'-triphosphoguanosine)-ribonucleoside in mRNA + diphosphate. The catalysed reaction is a 5'-end (5'-triphosphoguanosine)-ribonucleoside in mRNA + S-adenosyl-L-methionine = a 5'-end (N(7)-methyl 5'-triphosphoguanosine)-ribonucleoside in mRNA + S-adenosyl-L-homocysteine. The replicase polyprotein of coronaviruses is a multifunctional protein: it contains the activities necessary for the transcription of negative stranded RNA, leader RNA, subgenomic mRNAs and progeny virion RNA as well as proteinases responsible for the cleavage of the polyprotein into functional products. In terms of biological role, inhibits host translation by interacting with the 40S ribosomal subunit. The nsp1-40S ribosome complex further induces an endonucleolytic cleavage near the 5'UTR of host mRNAs, targeting them for degradation. Viral mRNAs are not susceptible to nsp1-mediated endonucleolytic RNA cleavage thanks to the presence of a 5'-end leader sequence and are therefore protected from degradation. By suppressing host gene expression, nsp1 facilitates efficient viral gene expression in infected cells and evasion from host immune response. Functionally, may play a role in the modulation of host cell survival signaling pathway by interacting with host PHB and PHB2. Indeed, these two proteins play a role in maintaining the functional integrity of the mitochondria and protecting cells from various stresses. Its function is as follows. Responsible for the cleavages located at the N-terminus of the replicase polyprotein. In addition, PL-PRO possesses a deubiquitinating/deISGylating activity and processes both 'Lys-48'- and 'Lys-63'-linked polyubiquitin chains from cellular substrates. Participates together with nsp4 in the assembly of virally-induced cytoplasmic double-membrane vesicles necessary for viral replication. Antagonizes innate immune induction of type I interferon by blocking the phosphorylation, dimerization and subsequent nuclear translocation of host IRF3. Also prevents host NF-kappa-B signaling. Participates in the assembly of virally-induced cytoplasmic double-membrane vesicles necessary for viral replication. In terms of biological role, cleaves the C-terminus of replicase polyprotein at 11 sites. Recognizes substrates containing the core sequence [ILMVF]-Q-|-[SGACN]. Also able to bind an ADP-ribose-1''-phosphate (ADRP). Functionally, plays a role in the initial induction of autophagosomes from host endoplasmic reticulum. Later, limits the expansion of these phagosomes that are no longer able to deliver viral components to lysosomes. Its function is as follows. Forms a hexadecamer with nsp8 (8 subunits of each) that may participate in viral replication by acting as a primase. Alternatively, may synthesize substantially longer products than oligonucleotide primers. Forms a hexadecamer with nsp7 (8 subunits of each) that may participate in viral replication by acting as a primase. Alternatively, may synthesize substantially longer products than oligonucleotide primers. In terms of biological role, forms a primer, NSP9-pU, which is utilized by the polymerase for the initiation of RNA chains. Interacts with ribosome signal recognition particle RNA (SRP). Together with NSP8, suppress protein integration into the cell membrane, thereby disrupting host immune defenses. Functionally, plays a pivotal role in viral transcription by stimulating both nsp14 3'-5' exoribonuclease and nsp16 2'-O-methyltransferase activities. Therefore plays an essential role in viral mRNAs cap methylation. Its function is as follows. RNA-directed RNA polymerase that catalyzes the transcription of viral genomic and subgenomic RNAs. Acts in complex with nsp7 and nsp8 to transcribe both the minus and positive strands of genomic RNA. The kinase-like NiRAN domain of NSP12 attaches one or more nucleotides to the amino terminus of NSP9, forming a covalent RNA-protein intermediate that serves as transcription/replication primer. Subgenomic RNAs (sgRNAs) are formed by discontinuous transcription: The polymerase has the ability to pause at transcription-regulating sequences (TRS) and jump to the leader TRS, resulting in a major deletion. This creates a series of subgenomic RNAs that are replicated, transcribed and translated. In addition, Nsp12 is a subunit of the viral RNA capping enzyme that catalyzes the RNA guanylyltransferase reaction for genomic and sub-genomic RNAs. Subsequently, the NiRAN domain transfers RNA to GDP, and forms the core cap structure GpppA-RNA. Multi-functional protein with a zinc-binding domain in N-terminus displaying RNA and DNA duplex-unwinding activities with 5' to 3' polarity. Activity of helicase is dependent on magnesium. In terms of biological role, plays a role in viral RNA synthesis through two distinct activities. The N7-guanine methyltransferase activity plays a role in the formation of the cap structure GpppA-RNA. The proofreading exoribonuclease reduces the sensitivity of the virus to RNA mutagens during replication. This activity acts on both ssRNA and dsRNA in a 3'-5' direction. Functionally, plays a role in viral transcription/replication and prevents the simultaneous activation of host cell dsRNA sensors, such as MDA5/IFIH1, OAS, and PKR. Acts by degrading the 5'-polyuridines generated during replication of the poly(A) region of viral genomic and subgenomic RNAs. Catalyzes a two-step reaction in which a 2'3'-cyclic phosphate (2'3'-cP) is first generated by 2'-O transesterification, which is then hydrolyzed to a 3'-phosphate (3'-P). If not degraded, poly(U) RNA would hybridize with poly(A) RNA tails and activate host dsRNA sensors. Its function is as follows. Methyltransferase that mediates mRNA cap 2'-O-ribose methylation to the 5'-cap structure of viral mRNAs. N7-methyl guanosine cap is a prerequisite for binding of nsp16. Therefore plays an essential role in viral mRNAs cap methylation which is essential to evade immune system. The protein is Replicase polyprotein 1ab (rep) of Bos taurus (Bovine).